The primary structure comprises 799 residues: Probable inorganic carbon transporter subunit DabA (799 aa).

Cysteine 303, aspartate 305, histidine 479, and cysteine 494 together coordinate Zn(2+). Positions 574–598 (AGAAAERSEALNGADPDKGVSETAS) are disordered.

The protein belongs to the inorganic carbon transporter (TC 9.A.2) DabA family. As to quaternary structure, forms a complex with DabB. It depends on Zn(2+) as a cofactor.

The protein resides in the cell membrane. Its function is as follows. Part of an energy-coupled inorganic carbon pump. This chain is Probable inorganic carbon transporter subunit DabA, found in Natronomonas pharaonis (strain ATCC 35678 / DSM 2160 / CIP 103997 / JCM 8858 / NBRC 14720 / NCIMB 2260 / Gabara) (Halobacterium pharaonis).